A 113-amino-acid chain; its full sequence is Small ribosomal subunit protein uS17 (113 aa).

This sequence belongs to the universal ribosomal protein uS17 family. In terms of assembly, part of the 30S ribosomal subunit.

One of the primary rRNA binding proteins, it binds specifically to the 5'-end of 16S ribosomal RNA. This Pyrococcus abyssi (strain GE5 / Orsay) protein is Small ribosomal subunit protein uS17.